A 197-amino-acid chain; its full sequence is Probable GTP-binding protein EngB (197 aa).

Residues 24–197 (DIPEIALAGR…WDAILEKVNK (174 aa)) form the EngB-type G domain. GTP contacts are provided by residues 32 to 39 (GRSNVGKS), 59 to 63 (GKTQL), 77 to 80 (DVPG), 144 to 147 (TKAD), and 176 to 178 (FSS). 2 residues coordinate Mg(2+): Ser39 and Thr61.

It belongs to the TRAFAC class TrmE-Era-EngA-EngB-Septin-like GTPase superfamily. EngB GTPase family. Mg(2+) is required as a cofactor.

In terms of biological role, necessary for normal cell division and for the maintenance of normal septation. In Streptococcus gordonii (strain Challis / ATCC 35105 / BCRC 15272 / CH1 / DL1 / V288), this protein is Probable GTP-binding protein EngB.